Consider the following 170-residue polypeptide: Lipoprotein signal peptidase (170 aa).

A run of 2 helical transmembrane segments spans residues 71 to 91 (YFFI…ILEN) and 97 to 116 (AIAY…DRVF). Active-site residues include Asp122 and Asp140. Residues 131–151 (WHWPAFNLADIAIVLGALLFV) traverse the membrane as a helical segment.

The protein belongs to the peptidase A8 family.

It is found in the cell inner membrane. The enzyme catalyses Release of signal peptides from bacterial membrane prolipoproteins. Hydrolyzes -Xaa-Yaa-Zaa-|-(S,diacylglyceryl)Cys-, in which Xaa is hydrophobic (preferably Leu), and Yaa (Ala or Ser) and Zaa (Gly or Ala) have small, neutral side chains.. It participates in protein modification; lipoprotein biosynthesis (signal peptide cleavage). Functionally, this protein specifically catalyzes the removal of signal peptides from prolipoproteins. This chain is Lipoprotein signal peptidase, found in Serratia marcescens.